The following is an 89-amino-acid chain: Small ribosomal subunit protein uS15 (89 aa).

The protein belongs to the universal ribosomal protein uS15 family. Part of the 30S ribosomal subunit. Forms a bridge to the 50S subunit in the 70S ribosome, contacting the 23S rRNA.

Its function is as follows. One of the primary rRNA binding proteins, it binds directly to 16S rRNA where it helps nucleate assembly of the platform of the 30S subunit by binding and bridging several RNA helices of the 16S rRNA. In terms of biological role, forms an intersubunit bridge (bridge B4) with the 23S rRNA of the 50S subunit in the ribosome. In Shewanella denitrificans (strain OS217 / ATCC BAA-1090 / DSM 15013), this protein is Small ribosomal subunit protein uS15.